The primary structure comprises 450 residues: Dol-P-Glc:Glc(2)Man(9)GlcNAc(2)-PP-Dol alpha-1,2-glucosyltransferase (450 aa).

The chain crosses the membrane as a helical span at residues 12 to 32; that stretch reads ISIISKYVAIVIFLIFVIIMF. Asn34 carries N-linked (GlcNAc...) asparagine glycosylation. 4 helical membrane-spanning segments follow: residues 158–178, 190–210, 243–263, and 273–293; these read YFLF…LGLI, ALVG…IAFI, LLGY…NGGI, and IELH…FTIP. Asn297 carries an N-linked (GlcNAc...) asparagine glycan. A run of 4 helical transmembrane segments spans residues 312–332, 357–377, 384–404, and 429–449; these read IILN…FTIV, LKPL…SSLI, FIGI…SPLF, and FIWL…KGII.

This sequence belongs to the ALG10 glucosyltransferase family.

It is found in the endoplasmic reticulum membrane. The catalysed reaction is an alpha-D-Glc-(1-&gt;3)-alpha-D-Glc-(1-&gt;3)-alpha-D-Man-(1-&gt;2)-alpha-D-Man-(1-&gt;2)-alpha-D-Man-(1-&gt;3)-[alpha-D-Man-(1-&gt;2)-alpha-D-Man-(1-&gt;3)-[alpha-D-Man-(1-&gt;2)-alpha-D-Man-(1-&gt;6)]-alpha-D-Man-(1-&gt;6)]-beta-D-Man-(1-&gt;4)-beta-D-GlcNAc-(1-&gt;4)-alpha-D-GlcNAc-diphospho-di-trans,poly-cis-dolichol + a di-trans,poly-cis-dolichyl beta-D-glucosyl phosphate = a alpha-D-Glc-(1-&gt;2)-alpha-D-Glc-(1-&gt;3)-alpha-D-Glc-(1-&gt;3)-alpha-D-Man-(1-&gt;2)-alpha-D-Man-(1-&gt;2)-alpha-D-Man-(1-&gt;3)-[alpha-D-Man-(1-&gt;2)-alpha-D-Man-(1-&gt;3)-[alpha-D-Man-(1-&gt;2)-alpha-D-Man-(1-&gt;6)]-alpha-D-Man-(1-&gt;6)]-beta-D-Man-(1-&gt;4)-beta-D-GlcNAc-(1-&gt;4)-alpha-D-GlcNAc-diphospho-di-trans,poly-cis-dolichol + a di-trans,poly-cis-dolichyl phosphate + H(+). It participates in protein modification; protein glycosylation. In terms of biological role, dol-P-Glc:Glc(2)Man(9)GlcNAc(2)-PP-Dol alpha-1,2-glucosyltransferase that operates in the biosynthetic pathway of dolichol-linked oligosaccharides, the glycan precursors employed in protein asparagine (N)-glycosylation. The assembly of dolichol-linked oligosaccharides begins on the cytosolic side of the endoplasmic reticulum membrane and finishes in its lumen. The sequential addition of sugars to dolichol pyrophosphate produces dolichol-linked oligosaccharides containing fourteen sugars, including two GlcNAcs, nine mannoses and three glucoses. Once assembled, the oligosaccharide is transferred from the lipid to nascent proteins by oligosaccharyltransferases. In the lumen of the endoplasmic reticulum, adds the third and last glucose residue from dolichyl phosphate glucose (Dol-P-Glc) onto the lipid-linked oligosaccharide intermediate Glc(2)Man(9)GlcNAc(2)-PP-Dol to produce Glc(3)Man(9)GlcNAc(2)-PP-Dol. This chain is Dol-P-Glc:Glc(2)Man(9)GlcNAc(2)-PP-Dol alpha-1,2-glucosyltransferase (DIE2), found in Candida albicans (strain SC5314 / ATCC MYA-2876) (Yeast).